Reading from the N-terminus, the 67-residue chain is ATP synthase F(0) complex subunit 8 (67 aa).

Residues 8 to 24 traverse the membrane as a helical segment; it reads TWFTVILSMIISLFMLL. Lys-54 bears the N6-acetyllysine; alternate mark. Lys-54 carries the post-translational modification N6-succinyllysine; alternate. Lys-57 bears the N6-acetyllysine mark.

It belongs to the ATPase protein 8 family. Component of the ATP synthase complex composed at least of ATP5F1A/subunit alpha, ATP5F1B/subunit beta, ATP5MC1/subunit c (homooctomer), MT-ATP6/subunit a, MT-ATP8/subunit 8, ATP5ME/subunit e, ATP5MF/subunit f, ATP5MG/subunit g, ATP5MK/subunit k, ATP5MJ/subunit j, ATP5F1C/subunit gamma, ATP5F1D/subunit delta, ATP5F1E/subunit epsilon, ATP5PF/subunit F6, ATP5PB/subunit b, ATP5PD/subunit d, ATP5PO/subunit OSCP. ATP synthase complex consists of a soluble F(1) head domain (subunits alpha(3) and beta(3)) - the catalytic core - and a membrane F(0) domain - the membrane proton channel (subunits c, a, 8, e, f, g, k and j). These two domains are linked by a central stalk (subunits gamma, delta, and epsilon) rotating inside the F1 region and a stationary peripheral stalk (subunits F6, b, d, and OSCP). Interacts with PRICKLE3.

It is found in the mitochondrion membrane. Functionally, subunit 8, of the mitochondrial membrane ATP synthase complex (F(1)F(0) ATP synthase or Complex V) that produces ATP from ADP in the presence of a proton gradient across the membrane which is generated by electron transport complexes of the respiratory chain. ATP synthase complex consist of a soluble F(1) head domain - the catalytic core - and a membrane F(1) domain - the membrane proton channel. These two domains are linked by a central stalk rotating inside the F(1) region and a stationary peripheral stalk. During catalysis, ATP synthesis in the catalytic domain of F(1) is coupled via a rotary mechanism of the central stalk subunits to proton translocation. In vivo, can only synthesize ATP although its ATP hydrolase activity can be activated artificially in vitro. Part of the complex F(0) domain. The sequence is that of ATP synthase F(0) complex subunit 8 from Cavia porcellus (Guinea pig).